The primary structure comprises 217 residues: Superoxide dismutase [Cu-Zn], chloroplastic (217 aa).

The transit peptide at 1 to 63 (MAAHSIFTTT…TTPKPLTVFA (63 aa)) directs the protein to the chloroplast. Positions 109, 111, and 126 each coordinate Cu cation. Cysteine 120 and cysteine 209 are disulfide-bonded. Residues histidine 126, histidine 134, histidine 143, and aspartate 146 each contribute to the Zn(2+) site. Cu cation is bound at residue histidine 183.

It belongs to the Cu-Zn superoxide dismutase family. Homotetramer. It depends on Cu cation as a cofactor. Zn(2+) serves as cofactor.

The protein localises to the plastid. The protein resides in the chloroplast. The catalysed reaction is 2 superoxide + 2 H(+) = H2O2 + O2. Destroys radicals which are normally produced within the cells and which are toxic to biological systems. This is Superoxide dismutase [Cu-Zn], chloroplastic (SODCP.2) from Solanum lycopersicum (Tomato).